The primary structure comprises 421 residues: Replication-associated recombination protein A (421 aa).

45-52 contacts ATP; the sequence is GPPGIGKT.

It belongs to the AAA ATPase family. RarA/MGS1/WRNIP1 subfamily. In terms of assembly, homotetramer. Interacts with single-stranded binding protein SsbA. May interact with PriA.

Its subcellular location is the cytoplasm. It is found in the nucleoid. SsDNA-dependent ATP hydrolysis is stimulated by single-stranded binding protein SsbA but not by SsbB; in the presence of SsbB, ssDNA secondary structure is removed and RarA's ATPase activity is decreased. The C-terminal 9 residues of SsbA are sufficient to stimulate ATPase activity. Its function is as follows. Plays a role in recombination-dependent DNA replication. Positively affects the formation of RecA threads during response to DNA damage, directly or indirectly counteracting the negative RecA modulators RecX and RecU. Stabilizes a RecA-ssDNA complex. In vitro, in the presence of SsbA, inhibits PriA-dependent DNA replication restart of both leading and lagging strands; elongation is insensitive to RarA. Plays a role in response to DNA damage, localizes to the replication fork but also to DNA elsewhere in the cell. Probably required for repair of single-stranded nicks generated by H(2)O(2). Epistatic to RecA, partially represses deletions of the error-prone translesion DNA polymerases (dinB1 and dinB2), genetically interacts with replicative helicase loaders dnaB and dnaD. Epistatic to recF and recO mutations upon DNA damage. A DNA-dependent ATPase stimulated by hairpin structures in circular single-stranded (ss)DNA or ssDNA-dsDNA junctions, by blunt end and 5'-tailed dsDNA and by single-stranded binding protein SsbA protein bound to ssDNA. Preferentially binds ssDNA and replication-fork structures; SsbA stimulates binding to ssDNA. Addition of ATP to the protein has no visible effect in vitro. In Bacillus subtilis (strain 168), this protein is Replication-associated recombination protein A.